We begin with the raw amino-acid sequence, 521 residues long: MSDNQREAGTIILDPTHASFAPEETVHDLGATHFIGIGGAGMSVLAEMLHEQGVEVDGSDREPSAKTDRLQSLGITVEFGQQAKNVEGKNTVVFSSAIKPDNPEIVAAHEAGERIVHRSDILALLMNAKRAVTVAGAHGKTTTSSMLAHILVNAGEGELADPSYAIGGSIQGKDGAILDGGHAGKGNVLVAEADESDGSFAKYHPQIAIITNSEADHLDHYGTQDNYRAAFVDHAGHATKAVIMCGDDEGNLAVLRALDATVAGRTIVYSTRNAAELGDLNGATLVRIESESETAESGAEHFTLHIPGGLIGEEERRIAVTLTVPGIHNARNASAAIIAAALLGMDVERASAAVTSFLGAARRFQVRGTVSQVTVVDDYAHHPTEIAALLDAARRRYPQSKIRVIFQPHLFSRTRFFSSEFAQALAKADDVIVTGIFPAREKQEDFPDVTPATIVDEALKLEHEPAKDWIRGVEDMHTAAQMMVMRAHHGDVIFTVGAGDITQMDEVILHALEAHRWDCEG.

136–142 (GAHGKTT) contacts ATP.

It belongs to the MurCDEF family.

It is found in the cytoplasm. The enzyme catalyses UDP-N-acetyl-alpha-D-muramate + L-alanine + ATP = UDP-N-acetyl-alpha-D-muramoyl-L-alanine + ADP + phosphate + H(+). The protein operates within cell wall biogenesis; peptidoglycan biosynthesis. Its function is as follows. Cell wall formation. This is UDP-N-acetylmuramate--L-alanine ligase from Bifidobacterium adolescentis (strain ATCC 15703 / DSM 20083 / NCTC 11814 / E194a).